We begin with the raw amino-acid sequence, 219 residues long: Small ribosomal subunit protein uS5 (219 aa).

An S5 DRBM domain is found at 52–115 (LDDEVLDINM…DVAKLNLISV (64 aa)). A disordered region spans residues 196 to 219 (LRNASQSRTPRRAAAKQREQEVSE).

The protein belongs to the universal ribosomal protein uS5 family. Part of the 30S ribosomal subunit. Contacts protein S4.

With S4 and S12 plays an important role in translational accuracy. The polypeptide is Small ribosomal subunit protein uS5 (Haloquadratum walsbyi (strain DSM 16790 / HBSQ001)).